The primary structure comprises 138 residues: Acidic phospholipase A2 ammodytin I1 (138 aa).

Residues 1–16 form the signal peptide; the sequence is MRILWIVAVCLIGAEG. Intrachain disulfides connect Cys42–Cys131, Cys44–Cys60, Cys59–Cys111, Cys65–Cys138, Cys66–Cys104, Cys73–Cys97, and Cys91–Cys102. Tyr43, Gly45, and Gly47 together coordinate Ca(2+). His63 is a catalytic residue. A Ca(2+)-binding site is contributed by Asp64. Residue Asp105 is part of the active site.

This sequence belongs to the phospholipase A2 family. Group II subfamily. D49 sub-subfamily. Ca(2+) is required as a cofactor. As to expression, expressed by the venom gland.

The protein resides in the secreted. It catalyses the reaction a 1,2-diacyl-sn-glycero-3-phosphocholine + H2O = a 1-acyl-sn-glycero-3-phosphocholine + a fatty acid + H(+). In terms of biological role, snake venom phospholipase A2 (PLA2) that has enzymatic activity but is non-toxic. PLA2 catalyzes the calcium-dependent hydrolysis of the 2-acyl groups in 3-sn-phosphoglycerides. In Vipera ammodytes ammodytes (Western sand viper), this protein is Acidic phospholipase A2 ammodytin I1.